A 265-amino-acid chain; its full sequence is Exosome complex component RRP42 (265 aa).

The protein belongs to the RNase PH family. In terms of assembly, component of the RNA exosome complex. Specifically part of the catalytically inactive RNA exosome core complex (Exo-9) which may associate with the catalytic subunits RRP6 and DIS3 in cytoplasmic- and nuclear-specific RNA exosome complex forms. Exo-9 is formed by a hexameric base ring of RNase PH domain-containing subunits and a cap ring consisting of CSL4, RRP4 and RRP40.

It localises to the cytoplasm. The protein resides in the nucleus. The protein localises to the nucleolus. In terms of biological role, non-catalytic component of the RNA exosome complex which has 3'-&gt;5' exoribonuclease activity and participates in a multitude of cellular RNA processing and degradation events. In the nucleus, the RNA exosome complex is involved in proper maturation of stable RNA species such as rRNA, snRNA and snoRNA, in the elimination of RNA processing by-products and non-coding 'pervasive' transcripts, such as antisense RNA species and cryptic unstable transcripts (CUTs), and of mRNAs with processing defects, thereby limiting or excluding their export to the cytoplasm. In the cytoplasm, the RNA exosome complex is involved in general mRNA turnover and in RNA surveillance pathways, preventing translation of aberrant mRNAs. The catalytic inactive RNA exosome core complex of 9 subunits (Exo-9) is proposed to play a pivotal role in the binding and presentation of RNA for ribonucleolysis, and to serve as a scaffold for the association with catalytic subunits and accessory proteins or complexes. RRP42 is part of the hexameric ring of RNase PH domain-containing subunits proposed to form a central channel which threads RNA substrates for degradation. This chain is Exosome complex component RRP42 (RRP42), found in Saccharomyces cerevisiae (strain ATCC 204508 / S288c) (Baker's yeast).